Here is a 366-residue protein sequence, read N- to C-terminus: Putative F-box protein At3g13624 (366 aa).

One can recognise an F-box domain in the interval 1-51 (MTTISDLPEDVVEEILPRVPLTSLSAVRSICKTWNTLSKNRVLCKAAVKKQ).

This is Putative F-box protein At3g13624 from Arabidopsis thaliana (Mouse-ear cress).